The following is a 629-amino-acid chain: tRNA uridine 5-carboxymethylaminomethyl modification enzyme MnmG (629 aa).

FAD is bound by residues 13–18 (GGGHAG), V125, and S180. Residue 273 to 287 (GPRYCPSIEDKVMRF) participates in NAD(+) binding. Q370 provides a ligand contact to FAD.

This sequence belongs to the MnmG family. Homodimer. Heterotetramer of two MnmE and two MnmG subunits. It depends on FAD as a cofactor.

Its subcellular location is the cytoplasm. In terms of biological role, NAD-binding protein involved in the addition of a carboxymethylaminomethyl (cmnm) group at the wobble position (U34) of certain tRNAs, forming tRNA-cmnm(5)s(2)U34. The protein is tRNA uridine 5-carboxymethylaminomethyl modification enzyme MnmG of Salmonella choleraesuis (strain SC-B67).